The primary structure comprises 675 residues: Sodium/myo-inositol cotransporter 2 (675 aa).

Topologically, residues methionine 1–glycine 27 are extracellular. The chain crosses the membrane as a helical span at residues aspartate 28 to valine 48. Over lysine 49 to methionine 65 the chain is Cytoplasmic. Residues valine 66–alanine 88 traverse the membrane as a helical segment. Residues glycine 89–glutamate 102 are Extracellular-facing. Residues leucine 103–glycine 123 traverse the membrane as a helical segment. Topologically, residues glutamine 124 to arginine 135 are cytoplasmic. A helical transmembrane segment spans residues phenylalanine 136–threonine 156. The Extracellular segment spans residues lysine 157–alanine 180. The helical transmembrane segment at isoleucine 181–isoleucine 201 threads the bilayer. At tyrosine 202–threonine 208 the chain is on the cytoplasmic side. The chain crosses the membrane as a helical span at residues leucine 209–methionine 229. The Extracellular segment spans residues glutamate 230–proline 272. Residues glycine 273–valine 293 traverse the membrane as a helical segment. The Cytoplasmic portion of the chain corresponds to glutamine 294–glycine 308. The chain crosses the membrane as a helical span at residues alanine 309–valine 329. The Extracellular segment spans residues serine 330–glycine 375. Residues leucine 376–alanine 396 traverse the membrane as a helical segment. Residues serine 397 to methionine 418 lie on the Cytoplasmic side of the membrane. Residues isoleucine 419–valine 439 form a helical membrane-spanning segment. The Extracellular portion of the chain corresponds to glutamine 440–glutamine 446. Residues leucine 447–isoleucine 467 traverse the membrane as a helical segment. Residues methionine 468 to glycine 479 lie on the Cytoplasmic side of the membrane. A helical membrane pass occupies residues alanine 480–isoleucine 500. Residues tyrosine 501 to tyrosine 521 lie on the Extracellular side of the membrane. Residues leucine 522–phenylalanine 542 traverse the membrane as a helical segment. Residues threonine 543 to threonine 654 lie on the Cytoplasmic side of the membrane. Residues leucine 655–alanine 675 traverse the membrane as a helical segment.

It belongs to the sodium:solute symporter (SSF) (TC 2.A.21) family. Highest expression in heart, skeletal muscle, kidney, liver and placenta. Weaker expression in brain, colon, spleen, lung and peripheral blood leukocytes.

The protein localises to the membrane. The protein resides in the apical cell membrane. It catalyses the reaction myo-inositol(out) + 2 Na(+)(out) = myo-inositol(in) + 2 Na(+)(in). The catalysed reaction is 1D-chiro-inositol(out) + 2 Na(+)(out) = 1D-chiro-inositol(in) + 2 Na(+)(in). The enzyme catalyses D-glucose(out) + 2 Na(+)(out) = D-glucose(in) + 2 Na(+)(in). It carries out the reaction D-xylose(out) + 2 Na(+)(out) = D-xylose(in) + 2 Na(+)(in). With respect to regulation, MI transport activity inhibited by D-chiro-inositol (DCI), phlorizin (Pz) and sodium (Na(+)). Insulin increases D-chiro-inositol uptake. Functionally, involved in the sodium-dependent cotransport of myo-inositol (MI) with a Na(+):MI stoichiometry of 2:1. Exclusively responsible for apical MI transport and absorption in intestine. Can also transport D-chiro-inositol (DCI) but not L-fucose. Exhibits stereospecific cotransport of both D-glucose and D-xylose. May induce apoptosis through the TNF-alpha, PDCD1 pathway. May play a role in the regulation of MI concentration in serum, involving reabsorption in at least the proximal tubule of the kidney. In Homo sapiens (Human), this protein is Sodium/myo-inositol cotransporter 2.